Reading from the N-terminus, the 564-residue chain is Sulfite reductase [NADPH] hemoprotein beta-component 1 (564 aa).

The [4Fe-4S] cluster site is built by Cys-426, Cys-432, Cys-471, and Cys-475. Cys-475 is a binding site for siroheme.

It belongs to the nitrite and sulfite reductase 4Fe-4S domain family. Alpha(8)-beta(8). The alpha component is a flavoprotein, the beta component is a hemoprotein. The cofactor is siroheme. [4Fe-4S] cluster serves as cofactor.

It carries out the reaction hydrogen sulfide + 3 NADP(+) + 3 H2O = sulfite + 3 NADPH + 4 H(+). The protein operates within sulfur metabolism; hydrogen sulfide biosynthesis; hydrogen sulfide from sulfite (NADPH route): step 1/1. In terms of biological role, component of the sulfite reductase complex that catalyzes the 6-electron reduction of sulfite to sulfide. This is one of several activities required for the biosynthesis of L-cysteine from sulfate. This Pectobacterium carotovorum subsp. carotovorum (strain PC1) protein is Sulfite reductase [NADPH] hemoprotein beta-component 1.